Consider the following 312-residue polypeptide: Protein phosphatase 2A catalytic subunit B (312 aa).

Aspartate 55, histidine 57, aspartate 83, and asparagine 115 together coordinate Mn(2+). Residue histidine 116 is the Proton donor of the active site. Residues histidine 165 and histidine 240 each contribute to the Mn(2+) site.

Belongs to the PPP phosphatase family. PP-2A subfamily. Component of the Sca1 complex composed of at least gefA, gefH, scaA, phr, and the protein phosphatase 2A subunits pppA and pho2B. Mn(2+) serves as cofactor.

The protein localises to the cell membrane. It carries out the reaction O-phospho-L-seryl-[protein] + H2O = L-seryl-[protein] + phosphate. The enzyme catalyses O-phospho-L-threonyl-[protein] + H2O = L-threonyl-[protein] + phosphate. Its function is as follows. Component of the Sca1 complex, a regulator of cell motility, chemotaxis and signal relay. The Sca1 complex is recruited to the plasma membrane in a chemoattractant- and F-actin-dependent manner and is enriched at the leading edge of chemotaxing cells where it regulates F-actin dynamics and signal relay by controlling the activation of rasC and the downstream target of rapamycin complex 2 (TORC2)-Akt/protein kinase B (PKB) pathway. This chain is Protein phosphatase 2A catalytic subunit B, found in Dictyostelium discoideum (Social amoeba).